A 281-amino-acid polypeptide reads, in one-letter code: 2-dehydro-3-deoxyphosphooctonate aldolase (281 aa).

It belongs to the KdsA family.

The protein localises to the cytoplasm. It carries out the reaction D-arabinose 5-phosphate + phosphoenolpyruvate + H2O = 3-deoxy-alpha-D-manno-2-octulosonate-8-phosphate + phosphate. It functions in the pathway carbohydrate biosynthesis; 3-deoxy-D-manno-octulosonate biosynthesis; 3-deoxy-D-manno-octulosonate from D-ribulose 5-phosphate: step 2/3. The protein operates within bacterial outer membrane biogenesis; lipopolysaccharide biosynthesis. The sequence is that of 2-dehydro-3-deoxyphosphooctonate aldolase from Stutzerimonas stutzeri (strain A1501) (Pseudomonas stutzeri).